A 128-amino-acid chain; its full sequence is Gastrotropin (128 aa).

Ala2 bears the N-acetylalanine mark.

The protein belongs to the calycin superfamily. Fatty-acid binding protein (FABP) family. Predominantly expressed in ileum; also expressed in ovary.

It is found in the cytoplasm. It localises to the membrane. Its function is as follows. Binds to bile acids and is involved in enterohepatic bile acid metabolism. Required for efficient apical to basolateral transport of conjugated bile acids in ileal enterocytes. Stimulates gastric acid and pepsinogen secretion. The protein is Gastrotropin (Fabp6) of Rattus norvegicus (Rat).